The following is a 356-amino-acid chain: Decorin (356 aa).

Residues 1-15 (MRLVLFILLLPVCLA) form the signal peptide. The propeptide occupies 16–29 (TPFHQKGLFDFMLE). Serine 45 carries O-linked (Xyl...) (glycosaminoglycan) serine glycosylation. Cystine bridges form between cysteine 51–cysteine 57 and cysteine 55–cysteine 64. 12 LRR repeats span residues 70-90 (ERVPKDLPPDTTLLDLQNNKI), 91-114 (TEIRDGDFKNLKNLHALILVNNKI), 115-138 (SKISPQAFAPLKKLERLYLSKNNL), 139-159 (KELPENMPKSLQEIRAHENEI), 160-183 (SKLRKAVFNGLNQVIVLELGTNPL), 184-209 (KSSGIENGAFQGMKRLSYIRIADTNI), 210-230 (TSIPKGLPPSLTELHLDGNKI), 231-254 (SKIDAEGLSGLTNLAKLGLSFNSI), 255-278 (SSVENGSLNNVPHLRELHLNNNEL), 279-301 (VRVPSGLGEHKYIQVVYLHNNKI), 302-331 (ASIGINDFCPLGYNTKKATYSGVSLFSNPV), and 332-356 (QYWEIQPSAFRCIHERSAVQIGNYK). A glycan (N-linked (GlcNAc...) asparagine) is linked at asparagine 208. Asparagine 259 carries an N-linked (GlcNAc...) asparagine glycan. A disulfide bond links cysteine 310 and cysteine 343.

It belongs to the small leucine-rich proteoglycan (SLRP) family. SLRP class I subfamily. In terms of assembly, binds to type I and type II collagen, to fibronectin and TGF-beta. Forms a ternary complex with MFAP2 and ELN. The attached glycosaminoglycan chain can be either chondroitin sulfate or dermatan sulfate depending upon the tissue of origin.

It is found in the secreted. Its subcellular location is the extracellular space. The protein localises to the extracellular matrix. Its function is as follows. May affect the rate of fibrils formation. This is Decorin (DCN) from Coturnix japonica (Japanese quail).